We begin with the raw amino-acid sequence, 360 residues long: Mannitol-1-phosphate 5-dehydrogenase (360 aa).

Residue 6–17 (ALHFGAGNIGRG) coordinates NAD(+).

It belongs to the mannitol dehydrogenase family.

The catalysed reaction is D-mannitol 1-phosphate + NAD(+) = beta-D-fructose 6-phosphate + NADH + H(+). In Mycoplasmopsis pulmonis (strain UAB CTIP) (Mycoplasma pulmonis), this protein is Mannitol-1-phosphate 5-dehydrogenase.